A 338-amino-acid polypeptide reads, in one-letter code: Taste receptor type 2 member 39 (338 aa).

Over 1 to 30 (MLGRCFPPNTKEKQQLRMIKLCDPAESELS) the chain is Extracellular. Residues 31-51 (PFLITLTLAVLLAEYLTGIIA) form a helical membrane-spanning segment. The Cytoplasmic segment spans residues 52-74 (NGFITAIHAAECVQNKSVSTSGR). The helical transmembrane segment at 75–95 (ILVFLSVSRIALQSLMMLEIT) threads the bilayer. Topologically, residues 96 to 116 (ISSTSLSFYSEDTVYYAFKIS) are extracellular. A helical transmembrane segment spans residues 117 to 137 (FIFLNFCSLWFAAWLSFFYFV). Residues 138–156 (KIANFSYPLFLKLRWRISG) lie on the Cytoplasmic side of the membrane. The helical transmembrane segment at 157 to 177 (LIPWLLWLSVFISFSHSMFCI) threads the bilayer. The Extracellular segment spans residues 178–205 (NICTGYCDNSFPIHSSNSTEKTYFSEIS). Asparagine 194 is a glycosylation site (N-linked (GlcNAc...) asparagine). The chain crosses the membrane as a helical span at residues 206–226 (VVSLAFFFNLGIVIPLIMFIL). Residues 227-262 (AAILLILSLKRHTLYMXSNATGSKDPSMEAHIGAIK) are Cytoplasmic-facing. A helical transmembrane segment spans residues 263 to 283 (ATSYFLILYIFNAVALFIYLS). Residues 284–291 (NMFDINSL) are Extracellular-facing. Residues 292–312 (WNTLCQIIMAAYPASHSILLI) form a helical membrane-spanning segment. At 313–338 (KDNPGLRRAWKQLQHRLHLYPKEWTL) the chain is on the cytoplasmic side.

The protein belongs to the G-protein coupled receptor T2R family.

Its subcellular location is the membrane. Its function is as follows. Receptor that may play a role in the perception of bitterness and is gustducin-linked. May play a role in sensing the chemical composition of the gastrointestinal content. The activity of this receptor may stimulate alpha gustducin, mediate PLC-beta-2 activation and lead to the gating of TRPM5. In Papio hamadryas (Hamadryas baboon), this protein is Taste receptor type 2 member 39 (TAS2R39).